A 279-amino-acid chain; its full sequence is Probable endonuclease 4 (279 aa).

Histidine 74, histidine 112, glutamate 147, aspartate 180, histidine 183, histidine 214, aspartate 227, histidine 229, and glutamate 259 together coordinate Zn(2+).

It belongs to the AP endonuclease 2 family. The cofactor is Zn(2+).

It carries out the reaction Endonucleolytic cleavage to 5'-phosphooligonucleotide end-products.. In terms of biological role, endonuclease IV plays a role in DNA repair. It cleaves phosphodiester bonds at apurinic or apyrimidinic (AP) sites, generating a 3'-hydroxyl group and a 5'-terminal sugar phosphate. This chain is Probable endonuclease 4, found in Mycoplasma mobile (strain ATCC 43663 / 163K / NCTC 11711) (Mesomycoplasma mobile).